Reading from the N-terminus, the 547-residue chain is Large cysteine-rich periplasmic protein OmcB (547 aa).

Residues 1 to 22 form the signal peptide; that stretch reads MNKLIRRAVTIFAVTSVASLFA. Residues 23 to 40 constitute a propeptide that is removed on maturation; the sequence is SGVLETSMAESLSTNVIS. The segment at 45–84 is disordered; the sequence is KAKDNTSHKSKKARKNHSKETPVDRKEVAPVHESKATGPK. Residues 52–61 are compositionally biased toward basic residues; sequence HKSKKARKNH. Basic and acidic residues predominate over residues 62 to 79; sequence SKETPVDRKEVAPVHESK.

As to quaternary structure, part of a disulfide cross-linked outer membrane complex (COMC) composed of the major outer membrane porin (MOMP), the small cysteine-rich protein (OmcA) and the large cysteine-rich periplasmic protein (OmcB).

Its subcellular location is the periplasm. Its function is as follows. In elementary bodies (EBs, the infectious stage, which is able to survive outside the host cell) provides the structural integrity of the outer envelope through disulfide cross-links with the small cysteine-rich protein and the major outer membrane protein. It has been described in publications as the Sarkosyl-insoluble COMC (Chlamydia outer membrane complex), and serves as the functional equivalent of peptidoglycan. This is Large cysteine-rich periplasmic protein OmcB (omcB) from Chlamydia trachomatis serovar D (strain ATCC VR-885 / DSM 19411 / UW-3/Cx).